Here is a 375-residue protein sequence, read N- to C-terminus: Anhydro-N-acetylmuramic acid kinase (375 aa).

ATP is bound at residue 12 to 19 (GTSMDGVD).

It belongs to the anhydro-N-acetylmuramic acid kinase family.

The catalysed reaction is 1,6-anhydro-N-acetyl-beta-muramate + ATP + H2O = N-acetyl-D-muramate 6-phosphate + ADP + H(+). The protein operates within amino-sugar metabolism; 1,6-anhydro-N-acetylmuramate degradation. It functions in the pathway cell wall biogenesis; peptidoglycan recycling. Catalyzes the specific phosphorylation of 1,6-anhydro-N-acetylmuramic acid (anhMurNAc) with the simultaneous cleavage of the 1,6-anhydro ring, generating MurNAc-6-P. Is required for the utilization of anhMurNAc either imported from the medium or derived from its own cell wall murein, and thus plays a role in cell wall recycling. In Photobacterium profundum (strain SS9), this protein is Anhydro-N-acetylmuramic acid kinase.